A 498-amino-acid polypeptide reads, in one-letter code: NADH-quinone oxidoreductase subunit N 2 (498 aa).

Transmembrane regions (helical) follow at residues 19 to 39 (VATQ…IALF), 47 to 67 (IVGY…IPLW), 83 to 103 (YSLT…VLSL), 114 to 134 (SEYY…AQGA), 136 to 156 (LIIL…LTGF), 171 to 191 (LLIG…LYGA), 215 to 235 (IYLL…VAMA), 249 to 269 (PTPI…AALL), 282 to 302 (IWAP…NIGA), 317 to 337 (IGHA…GGIA), 345 to 365 (VLLY…VLIA), 389 to 409 (LAVA…TGGF), 420 to 440 (WLSG…IAAF), and 468 to 488 (AGLA…TPAI).

This sequence belongs to the complex I subunit 2 family. In terms of assembly, NDH-1 is composed of 14 different subunits. Subunits NuoA, H, J, K, L, M, N constitute the membrane sector of the complex.

The protein resides in the cell membrane. It catalyses the reaction a quinone + NADH + 5 H(+)(in) = a quinol + NAD(+) + 4 H(+)(out). NDH-1 shuttles electrons from NADH, via FMN and iron-sulfur (Fe-S) centers, to quinones in the respiratory chain. The immediate electron acceptor for the enzyme in this species is believed to be ubiquinone. Couples the redox reaction to proton translocation (for every two electrons transferred, four hydrogen ions are translocated across the cytoplasmic membrane), and thus conserves the redox energy in a proton gradient. This chain is NADH-quinone oxidoreductase subunit N 2, found in Roseiflexus castenholzii (strain DSM 13941 / HLO8).